A 430-amino-acid chain; its full sequence is Ribulose bisphosphate carboxylase (430 aa).

Lys-160 serves as the catalytic Proton acceptor. Lys-162 contributes to the substrate binding site. Mg(2+)-binding residues include Lys-186, Asp-188, and Glu-189. Lys-186 bears the N6-carboxylysine mark. His-278 serves as the catalytic Proton acceptor. Residues Arg-279, His-311, 348-350, and 370-373 each bind substrate; these read SGG and QAGG.

It belongs to the RuBisCO large chain family. Type III subfamily. In terms of assembly, homodimer or homodecamer. In contrast to form I RuBisCO, the form III RuBisCO is composed solely of large subunits. Mg(2+) serves as cofactor.

It carries out the reaction 2 (2R)-3-phosphoglycerate + 2 H(+) = D-ribulose 1,5-bisphosphate + CO2 + H2O. It catalyses the reaction D-ribulose 1,5-bisphosphate + O2 = 2-phosphoglycolate + (2R)-3-phosphoglycerate + 2 H(+). Functionally, catalyzes the addition of molecular CO(2) and H(2)O to ribulose 1,5-bisphosphate (RuBP), generating two molecules of 3-phosphoglycerate (3-PGA). Functions in an archaeal AMP degradation pathway, together with AMP phosphorylase and R15P isomerase. In Pyrococcus horikoshii (strain ATCC 700860 / DSM 12428 / JCM 9974 / NBRC 100139 / OT-3), this protein is Ribulose bisphosphate carboxylase.